The primary structure comprises 155 residues: Deoxyuridine 5'-triphosphate nucleotidohydrolase (155 aa).

Substrate-binding positions include 74-76 (RSG), N87, and 91-93 (LID).

The protein belongs to the dUTPase family. Requires Mg(2+) as cofactor.

The enzyme catalyses dUTP + H2O = dUMP + diphosphate + H(+). It functions in the pathway pyrimidine metabolism; dUMP biosynthesis; dUMP from dCTP (dUTP route): step 2/2. This enzyme is involved in nucleotide metabolism: it produces dUMP, the immediate precursor of thymidine nucleotides and it decreases the intracellular concentration of dUTP so that uracil cannot be incorporated into DNA. The polypeptide is Deoxyuridine 5'-triphosphate nucleotidohydrolase (Xanthomonas oryzae pv. oryzae (strain MAFF 311018)).